An 80-amino-acid polypeptide reads, in one-letter code: Acyl carrier protein (80 aa).

The Carrier domain occupies 2–77 (SDTLKRLQKI…DALNYIENKI (76 aa)). Position 37 is an O-(pantetheine 4'-phosphoryl)serine (serine 37).

This sequence belongs to the acyl carrier protein (ACP) family. In terms of processing, 4'-phosphopantetheine is transferred from CoA to a specific serine of apo-ACP by AcpS. This modification is essential for activity because fatty acids are bound in thioester linkage to the sulfhydryl of the prosthetic group.

It localises to the plastid. It is found in the chloroplast. It functions in the pathway lipid metabolism; fatty acid biosynthesis. In terms of biological role, carrier of the growing fatty acid chain in fatty acid biosynthesis. This is Acyl carrier protein from Cylindrotheca sp. (strain N1) (Marine diatom).